A 311-amino-acid polypeptide reads, in one-letter code: Porphobilinogen deaminase (311 aa).

S-(dipyrrolylmethanemethyl)cysteine is present on Cys-241.

It belongs to the HMBS family. In terms of assembly, monomer. Dipyrromethane serves as cofactor.

The enzyme catalyses 4 porphobilinogen + H2O = hydroxymethylbilane + 4 NH4(+). The protein operates within porphyrin-containing compound metabolism; protoporphyrin-IX biosynthesis; coproporphyrinogen-III from 5-aminolevulinate: step 2/4. Its function is as follows. Tetrapolymerization of the monopyrrole PBG into the hydroxymethylbilane pre-uroporphyrinogen in several discrete steps. The protein is Porphobilinogen deaminase of Carboxydothermus hydrogenoformans (strain ATCC BAA-161 / DSM 6008 / Z-2901).